Consider the following 225-residue polypeptide: 2-C-methyl-D-erythritol 4-phosphate cytidylyltransferase (225 aa).

Belongs to the IspD/TarI cytidylyltransferase family. IspD subfamily.

It carries out the reaction 2-C-methyl-D-erythritol 4-phosphate + CTP + H(+) = 4-CDP-2-C-methyl-D-erythritol + diphosphate. Its pathway is isoprenoid biosynthesis; isopentenyl diphosphate biosynthesis via DXP pathway; isopentenyl diphosphate from 1-deoxy-D-xylulose 5-phosphate: step 2/6. Functionally, catalyzes the formation of 4-diphosphocytidyl-2-C-methyl-D-erythritol from CTP and 2-C-methyl-D-erythritol 4-phosphate (MEP). The protein is 2-C-methyl-D-erythritol 4-phosphate cytidylyltransferase of Prochlorococcus marinus (strain MIT 9313).